We begin with the raw amino-acid sequence, 156 residues long: Small ribosomal subunit protein uS7 (156 aa).

It belongs to the universal ribosomal protein uS7 family. In terms of assembly, part of the 30S ribosomal subunit. Contacts proteins S9 and S11.

One of the primary rRNA binding proteins, it binds directly to 16S rRNA where it nucleates assembly of the head domain of the 30S subunit. Is located at the subunit interface close to the decoding center, probably blocks exit of the E-site tRNA. The sequence is that of Small ribosomal subunit protein uS7 from Pseudoalteromonas translucida (strain TAC 125).